Reading from the N-terminus, the 275-residue chain is MSACGRKALTLLSSVFAVCGLGLLGIAVSTDYWLYLEEGIILPQNQSTEVKMSLHSGLWRVCFLAGEERGRCFTIEYVMPMNSQMTSESTVNVLKMIRSATPFPLVSLFFMFIGFILSNIGHIRPHRTILAFVSGIFFILSGLSLVVGLVLYISSINDEMLNRTKDAETYFNYKYGWSFAFAAISFLLTESAGVMSVYLFMKRYTAEDMYRPHPGFYRPRLSNCSDYSGQFLHPDAWIRGRSPSDISSDASLQMNSNYPALLKCPDYDQMSSSPC.

The next 4 membrane-spanning stretches (helical) occupy residues A8–V28, F103–I123, I129–L149, and F181–M201.

Belongs to the PMP-22/EMP/MP20 family. CACNG subfamily. In terms of assembly, the L-type calcium channel is composed of five subunits: alpha-1, alpha-2/delta, beta and gamma. Acts as an auxiliary subunit for AMPA-selective glutamate receptors (AMPARs). Found in a complex with GRIA1, GRIA2, GRIA3, GRIA4, CNIH2, CNIH3, CACNG2, CACNG3, CACNG4, CACNG7 and CACNG8. Interacts with GRIA1, GRIA2, GRIA3 and GRIA4. Brain. Enriched in Bergman glia, as well as a variety of neuronal populations including locus coeruleus, olfactory bulb, lateral septal nucleus, interpeduncular nucleus, and the CA2 and rostral/medial CA1 regions of hippocampus.

The protein localises to the membrane. Its subcellular location is the postsynaptic density membrane. Its function is as follows. Regulates the gating properties of AMPA-selective glutamate receptors (AMPARs). Modulates their gating properties by accelerating their rates of activation, deactivation and desensitization. Displays subunit-specific AMPA receptor regulation. Shows specificity for GRIA1, GRIA4 and the long isoform of GRIA2. Thought to stabilize the calcium channel in an inactivated (closed) state. In Mus musculus (Mouse), this protein is Voltage-dependent calcium channel gamma-5 subunit (Cacng5).